Reading from the N-terminus, the 219-residue chain is 3-dehydroquinate dehydratase (219 aa).

3-dehydroquinate-binding positions include 34–36 (ELR) and Arg63. Catalysis depends on His114, which acts as the Proton donor/acceptor. Lys139 acts as the Schiff-base intermediate with substrate in catalysis. Residues Arg174, Thr193, and Gln197 each coordinate 3-dehydroquinate.

The protein belongs to the type-I 3-dehydroquinase family. Homodimer.

The enzyme catalyses 3-dehydroquinate = 3-dehydroshikimate + H2O. It participates in metabolic intermediate biosynthesis; chorismate biosynthesis; chorismate from D-erythrose 4-phosphate and phosphoenolpyruvate: step 3/7. Involved in the third step of the chorismate pathway, which leads to the biosynthesis of aromatic amino acids. Catalyzes the cis-dehydration of 3-dehydroquinate (DHQ) and introduces the first double bond of the aromatic ring to yield 3-dehydroshikimate. This is 3-dehydroquinate dehydratase from Sulfolobus acidocaldarius (strain ATCC 33909 / DSM 639 / JCM 8929 / NBRC 15157 / NCIMB 11770).